The sequence spans 212 residues: MIIAIDGPAASGKGTLGKRLAAHYGYRHLDTGVIYRAVAKALLDQGAELTDETRAVAAAEALDPDTFADPALKSQTVGEAASVVSALPRVRAALLNFQRQFAAHPPGAVLDGRDIGTVICPEADVKIFVVADASVRAHRRTLEALARGEPADEAQVLADILKRDERDKSRAAAPLKAADDAHLLDNSHLDIESGVRAAIDIVEAVRAGRQRV.

ATP is bound at residue 7–15; sequence GPAASGKGT.

It belongs to the cytidylate kinase family. Type 1 subfamily.

Its subcellular location is the cytoplasm. It catalyses the reaction CMP + ATP = CDP + ADP. The catalysed reaction is dCMP + ATP = dCDP + ADP. This Rhodopseudomonas palustris (strain BisB18) protein is Cytidylate kinase.